A 221-amino-acid chain; its full sequence is Membrane-bound lytic murein transglycosylase E (221 aa).

This sequence belongs to the transglycosylase Slt family.

It carries out the reaction Exolytic cleavage of the (1-&gt;4)-beta-glycosidic linkage between N-acetylmuramic acid (MurNAc) and N-acetylglucosamine (GlcNAc) residues in peptidoglycan, from either the reducing or the non-reducing ends of the peptidoglycan chains, with concomitant formation of a 1,6-anhydrobond in the MurNAc residue.. In terms of biological role, murein-degrading enzyme. May play a role in recycling of muropeptides during cell elongation and/or cell division. The protein is Membrane-bound lytic murein transglycosylase E (mltE) of Buchnera aphidicola subsp. Acyrthosiphon pisum (strain APS) (Acyrthosiphon pisum symbiotic bacterium).